Here is a 600-residue protein sequence, read N- to C-terminus: Xylulose kinase (600 aa).

Substrate is bound at residue 79–82; the sequence is WLEA. A Phosphoserine modification is found at Ser-244. Asp-299 provides a ligand contact to substrate. ATP is bound by residues Gly-358 and 505-509; that span reads GASKN.

It belongs to the FGGY kinase family.

It is found in the cytoplasm. The enzyme catalyses D-xylulose + ATP = D-xylulose 5-phosphate + ADP + H(+). Its function is as follows. Xylulose kinase necessary for growth in culture media with D-xylulose as the solecarbon source. This is Xylulose kinase from Saccharomyces cerevisiae (strain ATCC 204508 / S288c) (Baker's yeast).